We begin with the raw amino-acid sequence, 197 residues long: Imidazoleglycerol-phosphate dehydratase (197 aa).

This sequence belongs to the imidazoleglycerol-phosphate dehydratase family.

The protein resides in the cytoplasm. The enzyme catalyses D-erythro-1-(imidazol-4-yl)glycerol 3-phosphate = 3-(imidazol-4-yl)-2-oxopropyl phosphate + H2O. The protein operates within amino-acid biosynthesis; L-histidine biosynthesis; L-histidine from 5-phospho-alpha-D-ribose 1-diphosphate: step 6/9. The protein is Imidazoleglycerol-phosphate dehydratase of Erythrobacter litoralis (strain HTCC2594).